We begin with the raw amino-acid sequence, 484 residues long: Glutamyl-tRNA(Gln) amidotransferase subunit A (484 aa).

Catalysis depends on charge relay system residues K77 and S152. The Acyl-ester intermediate role is filled by S176.

This sequence belongs to the amidase family. GatA subfamily. Heterotrimer of A, B and C subunits.

It catalyses the reaction L-glutamyl-tRNA(Gln) + L-glutamine + ATP + H2O = L-glutaminyl-tRNA(Gln) + L-glutamate + ADP + phosphate + H(+). In terms of biological role, allows the formation of correctly charged Gln-tRNA(Gln) through the transamidation of misacylated Glu-tRNA(Gln) in organisms which lack glutaminyl-tRNA synthetase. The reaction takes place in the presence of glutamine and ATP through an activated gamma-phospho-Glu-tRNA(Gln). In Lacticaseibacillus paracasei (strain ATCC 334 / BCRC 17002 / CCUG 31169 / CIP 107868 / KCTC 3260 / NRRL B-441) (Lactobacillus paracasei), this protein is Glutamyl-tRNA(Gln) amidotransferase subunit A.